The following is a 183-amino-acid chain: Phospholipase A2 inhibitor gamma subunit A1 (183 aa).

Disulfide bonds link cysteine 3–cysteine 28, cysteine 6–cysteine 13, cysteine 21–cysteine 49, cysteine 55–cysteine 76, cysteine 77–cysteine 82, cysteine 100–cysteine 125, cysteine 118–cysteine 147, and cysteine 151–cysteine 173. The N-linked (GlcNAc...) asparagine glycan is linked to asparagine 158.

This sequence belongs to the CNF-like-inhibitor family. In terms of assembly, heterodimer of subunit A and subunit B. As to expression, expressed by the liver.

Its subcellular location is the secreted. Functionally, phospholipase A2 (PA2) inhibitor. Inhibits the enzymatic activity of PA2 of Deinagkistrodon acutus. Also shows a wide anti-hemorrhage activities to D.acutus, Naja atra and Agkistrodon halys venom. The native protein is more potent than the recombinant one. The protein is Phospholipase A2 inhibitor gamma subunit A1 of Trimerodytes annularis (Red-bellied annulate keelback).